Consider the following 443-residue polypeptide: Ribosomal protein uS12 methylthiotransferase RimO (443 aa).

The 111-residue stretch at 5-115 (PNIGFISLGC…VMKHVHKYVP (111 aa)) folds into the MTTase N-terminal domain. [4Fe-4S] cluster-binding residues include Cys14, Cys50, Cys79, Cys147, Cys151, and Cys154. The Radical SAM core domain maps to 133-374 (LTPKHYAYLK…MQVQQRISAA (242 aa)). Residues 377–443 (QQKVGKTLAV…ADEYDLWGTC (67 aa)) enclose the TRAM domain.

Belongs to the methylthiotransferase family. RimO subfamily. It depends on [4Fe-4S] cluster as a cofactor.

Its subcellular location is the cytoplasm. It catalyses the reaction L-aspartate(89)-[ribosomal protein uS12]-hydrogen + (sulfur carrier)-SH + AH2 + 2 S-adenosyl-L-methionine = 3-methylsulfanyl-L-aspartate(89)-[ribosomal protein uS12]-hydrogen + (sulfur carrier)-H + 5'-deoxyadenosine + L-methionine + A + S-adenosyl-L-homocysteine + 2 H(+). Catalyzes the methylthiolation of an aspartic acid residue of ribosomal protein uS12. The sequence is that of Ribosomal protein uS12 methylthiotransferase RimO from Actinobacillus pleuropneumoniae serotype 5b (strain L20).